Here is a 277-residue protein sequence, read N- to C-terminus: Exosome complex component Rrp42 (277 aa).

The protein belongs to the RNase PH family. Rrp42 subfamily. As to quaternary structure, component of the archaeal exosome complex. Forms a hexameric ring-like arrangement composed of 3 Rrp41-Rrp42 heterodimers. The hexameric ring associates with a trimer of Rrp4 and/or Csl4 subunits.

The protein resides in the cytoplasm. Its function is as follows. Non-catalytic component of the exosome, which is a complex involved in RNA degradation. Contributes to the structuring of the Rrp41 active site. The sequence is that of Exosome complex component Rrp42 from Pyrococcus furiosus (strain ATCC 43587 / DSM 3638 / JCM 8422 / Vc1).